The primary structure comprises 83 residues: MANKLVLISLLCVVLVAKITQAAPQYAPGDEPSYDEDTDDSDKLVENDTSITDEDYAAIEASLSETFNTAADPGRRLGEGSKP.

A signal peptide spans 1-22 (MANKLVLISLLCVVLVAKITQA). The segment at 25–51 (QYAPGDEPSYDEDTDDSDKLVENDTSI) is disordered. An N-linked (GlcNAc...) asparagine glycan is attached at Asn47. The sufficient for host thrombin inhibition stretch occupies residues 54–83 (EDYAAIEASLSETFNTAADPGRRLGEGSKP). A blocks exosite I of host thrombin region spans residues 56–62 (YAAIEAS). The interval 64-83 (SETFNTAADPGRRLGEGSKP) is disordered. Positions 72-75 (DPGR) are blocks active site cleft of host thrombin in a reverse direction compared to substrates. A compositionally biased stretch (basic and acidic residues) spans 73–83 (PGRRLGEGSKP).

It belongs to the anophelin family. Interacts with human F2 (thrombin); the interaction results in thrombin inhibition. As to expression, salivary gland (at protein level).

It is found in the secreted. With respect to regulation, increasing concentration of NaCl decreases affinity for thrombin. Its function is as follows. Salivary protein with anticoagulant activity that inhibits host thrombin (F2); binds to the proteinase in a reverse orientation (opposite to substrates). Inhibits thrombin-induced platelet aggregation. This is Salivary thrombin inhibitor anophelin from Anopheles albimanus (New world malaria mosquito).